The following is a 141-amino-acid chain: Nucleoside diphosphate kinase (141 aa).

Positions 11, 59, 87, 93, 104, and 114 each coordinate ATP. His117 serves as the catalytic Pros-phosphohistidine intermediate.

Belongs to the NDK family. Homotetramer. Mg(2+) is required as a cofactor.

The protein localises to the cytoplasm. The catalysed reaction is a 2'-deoxyribonucleoside 5'-diphosphate + ATP = a 2'-deoxyribonucleoside 5'-triphosphate + ADP. The enzyme catalyses a ribonucleoside 5'-diphosphate + ATP = a ribonucleoside 5'-triphosphate + ADP. Functionally, major role in the synthesis of nucleoside triphosphates other than ATP. The ATP gamma phosphate is transferred to the NDP beta phosphate via a ping-pong mechanism, using a phosphorylated active-site intermediate. In Bordetella avium (strain 197N), this protein is Nucleoside diphosphate kinase.